We begin with the raw amino-acid sequence, 323 residues long: Acetyl-coenzyme A carboxylase carboxyl transferase subunit alpha (323 aa).

A CoA carboxyltransferase C-terminal domain is found at 39 to 293 (RLSKKSQQLT…RRALADSLRQ (255 aa)).

Belongs to the AccA family. As to quaternary structure, acetyl-CoA carboxylase is a heterohexamer composed of biotin carboxyl carrier protein (AccB), biotin carboxylase (AccC) and two subunits each of ACCase subunit alpha (AccA) and ACCase subunit beta (AccD).

Its subcellular location is the cytoplasm. It carries out the reaction N(6)-carboxybiotinyl-L-lysyl-[protein] + acetyl-CoA = N(6)-biotinyl-L-lysyl-[protein] + malonyl-CoA. It functions in the pathway lipid metabolism; malonyl-CoA biosynthesis; malonyl-CoA from acetyl-CoA: step 1/1. Functionally, component of the acetyl coenzyme A carboxylase (ACC) complex. First, biotin carboxylase catalyzes the carboxylation of biotin on its carrier protein (BCCP) and then the CO(2) group is transferred by the carboxyltransferase to acetyl-CoA to form malonyl-CoA. In Burkholderia orbicola (strain AU 1054), this protein is Acetyl-coenzyme A carboxylase carboxyl transferase subunit alpha.